Here is a 315-residue protein sequence, read N- to C-terminus: ADP/ATP translocase (315 aa).

Residues 1-13 (MSNKQETKILGMP) are Mitochondrial intermembrane-facing. Solcar repeat units lie at residues 13–106 (PPFV…FKAM) and 118–210 (KWMA…IKPV). The helical transmembrane segment at 14-37 (PFVVDFLMGGVSAAVSKTAAAPIE) threads the bilayer. Lys-30 is a bongkrekate binding site. At 38–80 (RIKLLVQNQDEMIKAGRLDRRYNGIIDCFRRTTADEGLMALWR) the chain is on the mitochondrial matrix side. Residues Ile-62 and 81–83 (GNT) each bind a cardiolipin. The chain crosses the membrane as a helical span at residues 81-104 (GNTANVIRYFPTQALNFAFRDKFK). Residue Arg-88 participates in ADP binding. Bongkrekate is bound by residues 88-89 (RY) and Asn-96. Topologically, residues 105 to 115 (AMFGYKKDKDG) are mitochondrial intermembrane. The chain crosses the membrane as a helical span at residues 116–145 (YAKWMAGNLASGGAAGATSLLFVYSLDYAR). Topologically, residues 146-184 (TRLANDAKSAKGGGARQFNGLIDVYRKTLASDGIAGLYR) are mitochondrial matrix. Residues Leu-166 and 184–185 (RG) contribute to the a cardiolipin site. A helical membrane pass occupies residues 185–213 (GFGPSVAGIVVYRGLYFGMYDSIKPVVLV). 196–197 (YR) is a binding site for bongkrekate. Topologically, residues 214-216 (GPL) are mitochondrial intermembrane. Residues 217-242 (ANNFLASFLLGWCVTTGAGIASYPLD) traverse the membrane as a helical segment. One copy of the Solcar repeat lies at 218-304 (NNFLASFLLG…LSIYDQLQIL (87 aa)). Over 243–283 (TVRRRMMMTSGEAVKYKSSIDAFRQIIAKEGVKSLFKGAGA) the chain is Mitochondrial matrix. An ADP-binding site is contributed by Arg-245. The Nucleotide carrier signature motif motif lies at 245–250 (RRRMMM). A cardiolipin is bound by residues 260 to 261 (SS) and 280 to 282 (GAG). Residues 284–304 (NILRGVAGAGVLSIYDQLQIL) traverse the membrane as a helical segment. Topologically, residues 305-315 (LFGKAFKGGSG) are mitochondrial intermembrane.

The protein belongs to the mitochondrial carrier (TC 2.A.29) family. In terms of assembly, monomer.

Its subcellular location is the mitochondrion inner membrane. The enzyme catalyses ADP(in) + ATP(out) = ADP(out) + ATP(in). With respect to regulation, the matrix-open state (m-state) is inhibited by the membrane-permeable bongkrekic acid (BKA). The cytoplasmic-open state (c-state) is inhibited by the membrane-impermeable toxic inhibitor carboxyatractyloside (CATR). Functionally, ADP:ATP antiporter that mediates import of ADP into the mitochondrial matrix for ATP synthesis, and export of ATP out to fuel the cell. Cycles between the cytoplasmic-open state (c-state) and the matrix-open state (m-state): operates by the alternating access mechanism with a single substrate-binding site intermittently exposed to either the cytosolic (c-state) or matrix (m-state) side of the inner mitochondrial membrane. This is ADP/ATP translocase from Thermothelomyces thermophilus (strain ATCC 42464 / BCRC 31852 / DSM 1799) (Sporotrichum thermophile).